The sequence spans 131 residues: Glycine cleavage system H protein (131 aa).

Residues 24 to 106 (RVTVGISDHA…YGEGWMFVVE (83 aa)) enclose the Lipoyl-binding domain. Position 65 is an N6-lipoyllysine (lysine 65).

This sequence belongs to the GcvH family. In terms of assembly, the glycine cleavage system is composed of four proteins: P, T, L and H. Requires (R)-lipoate as cofactor.

The glycine cleavage system catalyzes the degradation of glycine. The H protein shuttles the methylamine group of glycine from the P protein to the T protein. The protein is Glycine cleavage system H protein of Stenotrophomonas maltophilia (strain K279a).